The following is an 809-amino-acid chain: Phospholipase D alpha 1 (809 aa).

In terms of domain architecture, C2 spans 1–125; that stretch reads MAQILLHGTL…LDGHEIDKWV (125 aa). Asp-186 is a Ca(2+) binding site. The PLD phosphodiesterase 1 domain maps to 326–365; that stretch reads TMFTHHQKIVVVDSALPGGGGSDKRRIVSFVGGLDLCDGR. Catalysis depends on residues His-331, Lys-333, and Asp-338. His-331 lines the a 1,2-diacyl-sn-glycero-3-phosphate pocket. The Ca(2+) site is built by His-371 and His-405. Residues Gln-521 and His-660 each coordinate a 1,2-diacyl-sn-glycero-3-phosphate. Positions 655-682 constitute a PLD phosphodiesterase 2 domain; sequence FMIYVHTKMMIVDDEYIIIGSANINQRS. Catalysis depends on residues His-660, Lys-662, and Asp-667. Residue Glu-721 participates in Ca(2+) binding.

Belongs to the phospholipase D family. C2-PLD subfamily. Requires Ca(2+) as cofactor.

It catalyses the reaction a 1,2-diacyl-sn-glycero-3-phosphocholine + H2O = a 1,2-diacyl-sn-glycero-3-phosphate + choline + H(+). In terms of biological role, hydrolyzes glycerol-phospholipids at the terminal phosphodiesteric bond. Plays an important role in various cellular processes. The chain is Phospholipase D alpha 1 (PLD1) from Vigna unguiculata (Cowpea).